The chain runs to 267 residues: uncharacterized protein (267 aa).

A helical transmembrane segment spans residues 30–52 (FMRIFLLFLFFVLFTFGVEGYVI).

It is found in the membrane. This is an uncharacterized protein from Aquifex aeolicus (strain VF5).